The chain runs to 475 residues: Ribulose bisphosphate carboxylase large chain (475 aa).

The propeptide occupies 1–2 (MS). N-acetylproline is present on P3. K14 carries the post-translational modification N6,N6,N6-trimethyllysine. Substrate contacts are provided by N123 and T173. K175 functions as the Proton acceptor in the catalytic mechanism. K177 provides a ligand contact to substrate. Residues K201, D203, and E204 each coordinate Mg(2+). K201 is subject to N6-carboxylysine. Catalysis depends on H294, which acts as the Proton acceptor. Substrate-binding residues include R295, H327, and S379.

This sequence belongs to the RuBisCO large chain family. Type I subfamily. In terms of assembly, heterohexadecamer of 8 large chains and 8 small chains; disulfide-linked. The disulfide link is formed within the large subunit homodimers. The cofactor is Mg(2+). Post-translationally, the disulfide bond which can form in the large chain dimeric partners within the hexadecamer appears to be associated with oxidative stress and protein turnover.

The protein resides in the plastid. The protein localises to the chloroplast. It carries out the reaction 2 (2R)-3-phosphoglycerate + 2 H(+) = D-ribulose 1,5-bisphosphate + CO2 + H2O. The catalysed reaction is D-ribulose 1,5-bisphosphate + O2 = 2-phosphoglycolate + (2R)-3-phosphoglycerate + 2 H(+). RuBisCO catalyzes two reactions: the carboxylation of D-ribulose 1,5-bisphosphate, the primary event in carbon dioxide fixation, as well as the oxidative fragmentation of the pentose substrate in the photorespiration process. Both reactions occur simultaneously and in competition at the same active site. This chain is Ribulose bisphosphate carboxylase large chain, found in Chlorokybus atmophyticus (Soil alga).